A 279-amino-acid chain; its full sequence is uncharacterized protein (279 aa).

This sequence belongs to the PhzF family.

This is an uncharacterized protein from Vibrio cholerae serotype O1 (strain ATCC 39315 / El Tor Inaba N16961).